The primary structure comprises 423 residues: 3-phosphoshikimate 1-carboxyvinyltransferase (423 aa).

Residues K19, S20, and R24 each coordinate 3-phosphoshikimate. Residue K19 coordinates phosphoenolpyruvate. Positions 89 and 118 each coordinate phosphoenolpyruvate. Residues S164, S165, Q166, S192, D304, and K331 each coordinate 3-phosphoshikimate. A phosphoenolpyruvate-binding site is contributed by Q166. D304 acts as the Proton acceptor in catalysis. Phosphoenolpyruvate-binding residues include R335 and R377.

The protein belongs to the EPSP synthase family. In terms of assembly, monomer.

It localises to the cytoplasm. It catalyses the reaction 3-phosphoshikimate + phosphoenolpyruvate = 5-O-(1-carboxyvinyl)-3-phosphoshikimate + phosphate. It participates in metabolic intermediate biosynthesis; chorismate biosynthesis. Catalyzes the transfer of the enolpyruvyl moiety of phosphoenolpyruvate (PEP) to the 5-hydroxyl of shikimate-3-phosphate (S3P) to produce enolpyruvyl shikimate-3-phosphate and inorganic phosphate. The chain is 3-phosphoshikimate 1-carboxyvinyltransferase from Korarchaeum cryptofilum (strain OPF8).